The following is a 524-amino-acid chain: Inorganic phosphate transporter 1-1 (524 aa).

At 1-24 the chain is on the cytoplasmic side; it reads MAEQQLGVLKALDVAKTQLYHFTA. A helical membrane pass occupies residues 25–45; it reads IVIAGMGFFTDAYDLFCVSLV. Residues 46–70 are Extracellular-facing; the sequence is TKLLGRIYYFNPESAKPGSLPPHVA. A helical membrane pass occupies residues 71–91; sequence AAVNGVALCGTLSGQLFFGWL. The Cytoplasmic portion of the chain corresponds to 92 to 99; that stretch reads GDKLGRKK. Residues 100 to 120 traverse the membrane as a helical segment; it reads VYGLTLVMMILCSVASGLSFG. The Extracellular portion of the chain corresponds to 121–131; sequence HEAKGVMTTLC. Residues 132-152 traverse the membrane as a helical segment; that stretch reads FFRFWLGFGIGGDYPLSATIM. Over 153 to 161 the chain is Cytoplasmic; it reads SEYANKKTR. The chain crosses the membrane as a helical span at residues 162–182; the sequence is GAFIAAVFAMQGVGILAGGFV. At 183-211 the chain is on the extracellular side; the sequence is ALAVSSIFDKKFPAPTYAVNRALSTPPQV. Residues 212-232 traverse the membrane as a helical segment; it reads DYIWRIIVMFGALPAALTYYW. The Cytoplasmic segment spans residues 233-292; sequence RMKMPETARYTALVAKNIKQATADMSKVLQTDIELEERVEDDVKDPKQNYGLFSKEFLRR. The chain crosses the membrane as a helical span at residues 293-313; the sequence is HGLHLLGTTSTWFLLDIAFYS. Over 314–348 the chain is Extracellular; sequence QNLFQKDIFSAIGWIPKAATMNATHEVFRIARAQT. Residues 349–369 traverse the membrane as a helical segment; it reads LIALCSTVPGYWFTVAFIDTI. At 370 to 371 the chain is on the cytoplasmic side; sequence GR. The chain crosses the membrane as a helical span at residues 372 to 392; it reads FKIQLNGFFMMTVFMFAIAFP. The Extracellular portion of the chain corresponds to 393 to 402; that stretch reads YNHWIKPENR. The chain crosses the membrane as a helical span at residues 403–423; sequence IGFVVMYSLTFFFANFGPNAT. At 424–441 the chain is on the cytoplasmic side; it reads TFIVPAEIFPARLRSTCH. The helical transmembrane segment at 442–462 threads the bilayer; it reads GISAAAGKAGAIVGAFGFLYA. Residues 463–484 lie on the Extracellular side of the membrane; the sequence is AQSQDKAKVDAGYPPGIGVKNS. Residues 485-505 traverse the membrane as a helical segment; the sequence is LIMLGVLNFIGMLFTFLVPEP. Residues 506–524 are Cytoplasmic-facing; that stretch reads KGKSLEELSGEAEVSHDEK.

It belongs to the major facilitator superfamily. Phosphate:H(+) symporter (TC 2.A.1.9) family. In terms of assembly, interacts with NLA. Post-translationally, ubiquitinated by NLA. Ubiquitination of PHT1-1 leads to its degradation by the proteasome. As to expression, mostly expressed in roots, especially in trichoblasts and in emerging secondary roots and root hairs, but not in root tips. Also present in hydathodes, axillary buds and peripheral endosperm of germinating seeds.

It localises to the cell membrane. Inhibited by protonophores (e.g. 2,4-dinitrophenol and carbonylcyanide m-chlorophenylhydrazone), the plasma membrane H(+)-ATPase inhibitor diethylstilbestorol, and the phosphate analog arsenate. Functionally, high-affinity transporter for external inorganic phosphate. Acts as a H(+):phosphate symporter in both low- and high-Pi conditions. Confers sensitivity to arsenate. The protein is Inorganic phosphate transporter 1-1 (PHT1-1) of Arabidopsis thaliana (Mouse-ear cress).